A 183-amino-acid chain; its full sequence is UPF0398 protein LSL_0930 (183 aa).

Belongs to the UPF0398 family.

The sequence is that of UPF0398 protein LSL_0930 from Ligilactobacillus salivarius (strain UCC118) (Lactobacillus salivarius).